A 512-amino-acid polypeptide reads, in one-letter code: MDLKESPSEGSLQPSSIQIFANTSTLHGIRHIFVYGPLTIRRVLWAVAFVGSLGLLLVESSERVSYYFSYQHVTKVDEVVAQSLVFPAVTLCNLNGFRFSRLTTNDLYHAGELLALLDVNLQIPDPHLADPTVLEALRQKANFKHYKPKQFSMLEFLHRVGHDLKDMMLYCKFKGQECGHQDFTTVFTKYGKCYMFNSGEDGKPLLTTVKGGTGNGLEIMLDIQQDEYLPIWGETEETTFEAGVKVQIHSQSEPPFIQELGFGVAPGFQTFVATQEQRLTYLPPPWGECRSSEMGLDFFPVYSITACRIDCETRYIVENCNCRMVHMPGDAPFCTPEQHKECAEPALGLLAEKDSNYCLCRTPCNLTRYNKELSMVKIPSKTSAKYLEKKFNKSEKYISENILVLDIFFEALNYETIEQKKAYEVAALLGDIGGQMGLFIGASLLTILELFDYIYELIKEKLLDLLGKEEEEGSHDENMSTCDTMPNHSETISHTVNVPLQTALGTLEEIAC.

The Cytoplasmic portion of the chain corresponds to 1–37 (MDLKESPSEGSLQPSSIQIFANTSTLHGIRHIFVYGP). Phosphoserine is present on residues Ser-8 and Ser-11. A helical membrane pass occupies residues 38-58 (LTIRRVLWAVAFVGSLGLLLV). The Extracellular portion of the chain corresponds to 59-427 (ESSERVSYYF…EQKKAYEVAA (369 aa)). Cystine bridges form between Cys-92-Cys-193, Cys-289-Cys-364, Cys-307-Cys-360, Cys-311-Cys-358, Cys-320-Cys-342, and Cys-322-Cys-334. Asn-365 and Asn-392 each carry an N-linked (GlcNAc...) asparagine glycan. Residues 428–448 (LLGDIGGQMGLFIGASLLTIL) traverse the membrane as a helical segment. A GAS motif; ion selectivity filter motif is present at residues 441–443 (GAS). At 449-512 (ELFDYIYELI…ALGTLEEIAC (64 aa)) the chain is on the cytoplasmic side.

This sequence belongs to the amiloride-sensitive sodium channel (TC 1.A.6) family. ASIC2 subfamily. As to quaternary structure, can form homotrimers. Heterotrimer; forms functional heterotrimers producing channel with different properties. Forms heterotrimers with ASIC1; while ASIC1 determines current amplitude, ASIC2 influences the properties of the current. Forms heterotrimers with ASIC3; resulting in channels with distinct properties. Interacts with STOM; STOM regulates the gating of ASIC2-containing channels. Interacts with PICK1; promotes ASIC3 phosphorylation by PKC and activation of ASIC2/ASIC3 heterotrimers. Expressed in sciatic nerve and dorsal root ganglion (DRG) (at protein level). Both isoforms display the same expression pattern except in DRG where isoform 2 is more abundantly expressed. Widely distributed throughout the brain. Highly expressed in the main olfactory bulb, neo- and allo-cortical regions, hippocampal formation, habenula, basolateral amygdaloid nuclei, and cerebellum. In the olfactory system, expressed in the glomerular cell layer, the internal granular layer, and the mitral and internal plexiform cell layers. Within the glomerular layer, restricted to the periglomerular cells. In the neocortex, strongly expressed in the large pyramidal neurons in all cortical layers as well as in the oligo-, astro-, or micro-glia cells. In the hippocampal formation, expressed in dentate granule cells and hilar neurons, as well as in pyramidal cells of CA1-CA3 subfields. Expressed in stratum oriens and radiatum of all subfields. Within the thalamus, expressed moderately in the medial and lateral habenula. In the cerebellar cortex expressed in Purkinje cells and granule cells. Expressed at low levels in choroid plexus.

It localises to the cell membrane. The enzyme catalyses Na(+)(in) = Na(+)(out). The catalysed reaction is K(+)(in) = K(+)(out). It carries out the reaction Li(+)(in) = Li(+)(out). Inhibited by the diuretic drug amiloride. Inhibited by gadolinium ions, the heterotrimer with ASIC3 being more sensitive. Zn(2+) potentiates the acid activation of ASIC2-containing homomeric and heteromeric channels. The snake venom mambalgin-1 and mambalgin-2 inhibit the homotrimers composed of ASIC1 and ASIC2 and have strong analgesic effects. Its function is as follows. Forms pH-gated trimeric sodium channels that act as postsynaptic excitatory sensors in the nervous system. Upon extracellular acidification, these channels generate rapid, transient inward currents that fully desensitize. Highly selective for sodium, they are permeable to other cations. By forming heterotrimeric channels with ASIC1, could contribute to synaptic plasticity, learning, and memory. Additionally, as acid sensors at nerve terminals, plays a role in mechanosensation and phototransduction. Functionally, has no pH-gated sodium channel activity per se but can associate with other ASICs to produce functional channels with specific properties. This Rattus norvegicus (Rat) protein is Acid-sensing ion channel 2.